Reading from the N-terminus, the 126-residue chain is Protein ApaG (126 aa).

In terms of domain architecture, ApaG spans 2 to 126 (SALDDSIRVE…FRLALPGLLH (125 aa)).

This Shewanella sp. (strain ANA-3) protein is Protein ApaG.